The following is a 279-amino-acid chain: Phycobilisome rod-core linker polypeptide CpcG1 (279 aa).

The PBS-linker domain occupies 11 to 189 (TTQNQRVEGY…YWRNRLLEQF (179 aa)).

Belongs to the phycobilisome linker protein family. In terms of assembly, the phycobilisome is a hemidiscoidal structure that is composed of two distinct substructures: a core complex and a number of rods radiating from the core.

The protein localises to the cellular thylakoid membrane. In terms of biological role, rod-core linker protein required for attachment of phycocyanin to allophycocyanin in cores of phycobilisomes. Its function is as follows. Linker polypeptides determine the state of aggregation and the location of the disk-shaped phycobiliprotein units within the phycobilisome and modulate their spectroscopic properties in order to mediate a directed and optimal energy transfer. The sequence is that of Phycobilisome rod-core linker polypeptide CpcG1 (cpcG1) from Mastigocladus laminosus (Fischerella sp.).